A 173-amino-acid chain; its full sequence is Large ribosomal subunit protein uL16 (173 aa).

This sequence belongs to the universal ribosomal protein uL16 family.

This chain is Large ribosomal subunit protein uL16, found in Methanococcus maripaludis (strain C6 / ATCC BAA-1332).